The primary structure comprises 256 residues: Probable enoyl-CoA hydratase echA14 (256 aa).

The tract at residues 235–256 is disordered; that stretch reads GPQAKSVQSPEFAARLAAAQHR.

This sequence belongs to the enoyl-CoA hydratase/isomerase family.

It catalyses the reaction a (3S)-3-hydroxyacyl-CoA = a (2E)-enoyl-CoA + H2O. The enzyme catalyses a 4-saturated-(3S)-3-hydroxyacyl-CoA = a (3E)-enoyl-CoA + H2O. Its function is as follows. Could possibly oxidize fatty acids using specific components. In Mycobacterium tuberculosis (strain CDC 1551 / Oshkosh), this protein is Probable enoyl-CoA hydratase echA14 (echA14).